The sequence spans 283 residues: Elongation factor Ts (283 aa).

The segment at 79–82 is involved in Mg(2+) ion dislocation from EF-Tu; it reads TDFV.

Belongs to the EF-Ts family.

It is found in the cytoplasm. Associates with the EF-Tu.GDP complex and induces the exchange of GDP to GTP. It remains bound to the aminoacyl-tRNA.EF-Tu.GTP complex up to the GTP hydrolysis stage on the ribosome. In Shewanella baltica (strain OS155 / ATCC BAA-1091), this protein is Elongation factor Ts.